The sequence spans 310 residues: Malate dehydrogenase (310 aa).

Residues 7 to 12 and aspartate 32 each bind NAD(+); that span reads GAGNVG. Substrate is bound by residues arginine 81 and arginine 87. Residues asparagine 94 and 117-119 contribute to the NAD(+) site; that span reads VSN. The substrate site is built by asparagine 119 and arginine 150. The Proton acceptor role is filled by histidine 174.

The protein belongs to the LDH/MDH superfamily. MDH type 3 family.

It catalyses the reaction (S)-malate + NAD(+) = oxaloacetate + NADH + H(+). Functionally, catalyzes the reversible oxidation of malate to oxaloacetate. The polypeptide is Malate dehydrogenase (Chlorobium luteolum (strain DSM 273 / BCRC 81028 / 2530) (Pelodictyon luteolum)).